Reading from the N-terminus, the 263-residue chain is Methylesterase 3 (263 aa).

Catalysis depends on serine 85, which acts as the Acyl-ester intermediate. Active-site charge relay system residues include aspartate 213 and histidine 241.

Belongs to the AB hydrolase superfamily. Methylesterase family.

It carries out the reaction methyl (indol-3-yl)acetate + H2O = (indol-3-yl)acetate + methanol + H(+). It catalyses the reaction methyl (-)-jasmonate + H2O = jasmonate + methanol + H(+). Its pathway is plant hormone biosynthesis. It participates in lipid metabolism; oxylipin biosynthesis. Its function is as follows. Methylesterase shown to have carboxylesterase activity, methyl indole-3-acetic acid (MeIAA) esterase activity and methyl jasmonate (MeJA) esterase activity in vitro. In Arabidopsis thaliana (Mouse-ear cress), this protein is Methylesterase 3.